The primary structure comprises 107 residues: UPF0145 protein YbjQ (107 aa).

Belongs to the UPF0145 family.

The protein is UPF0145 protein YbjQ of Shigella flexneri.